Reading from the N-terminus, the 144-residue chain is Universal stress protein F (144 aa).

The protein belongs to the universal stress protein A family. Homodimer.

The sequence is that of Universal stress protein F (uspF) from Escherichia coli (strain K12).